Here is a 173-residue protein sequence, read N- to C-terminus: Alpha-crystallin B chain (173 aa).

Met-1 is subject to N-acetylmethionine. The region spanning 54–162 is the sHSP domain; sequence RLPSWIESGL…PERSIPITRE (109 aa). Zn(2+) is bound by residues His-81, His-102, Glu-104, and His-109.

This sequence belongs to the small heat shock protein (HSP20) family. As to quaternary structure, heteromer composed of three CRYAA and one CRYAB subunits. Aggregates with homologous proteins, including the small heat shock protein HSPB1, to form large heteromeric complexes. Inter-subunit bridging via zinc ions enhances stability, which is crucial as there is no protein turn over in the lens.

Its function is as follows. May contribute to the transparency and refractive index of the lens. This is Alpha-crystallin B chain (CRYAB) from Aquarana catesbeiana (American bullfrog).